Here is a 319-residue protein sequence, read N- to C-terminus: tRNA dimethylallyltransferase (319 aa).

9–16 (GPTAVGKS) provides a ligand contact to ATP. 11 to 16 (TAVGKS) is a substrate binding site. The interaction with substrate tRNA stretch occupies residues 39 to 42 (DSMQ).

The protein belongs to the IPP transferase family. Monomer. Mg(2+) is required as a cofactor.

It carries out the reaction adenosine(37) in tRNA + dimethylallyl diphosphate = N(6)-dimethylallyladenosine(37) in tRNA + diphosphate. Catalyzes the transfer of a dimethylallyl group onto the adenine at position 37 in tRNAs that read codons beginning with uridine, leading to the formation of N6-(dimethylallyl)adenosine (i(6)A). This chain is tRNA dimethylallyltransferase, found in Thermobifida fusca (strain YX).